The sequence spans 116 residues: Flagellar transcriptional regulator FlhD (116 aa).

The protein belongs to the FlhD family. In terms of assembly, homodimer; disulfide-linked. Forms a heterohexamer composed of two FlhC and four FlhD subunits. Each FlhC binds a FlhD dimer, forming a heterotrimer, and a hexamer assembles by dimerization of two heterotrimers.

Its subcellular location is the cytoplasm. Its function is as follows. Functions in complex with FlhC as a master transcriptional regulator that regulates transcription of several flagellar and non-flagellar operons by binding to their promoter region. Activates expression of class 2 flagellar genes, including fliA, which is a flagellum-specific sigma factor that turns on the class 3 genes. Also regulates genes whose products function in a variety of physiological pathways. The polypeptide is Flagellar transcriptional regulator FlhD (Enterobacter sp. (strain 22)).